Consider the following 463-residue polypeptide: FAD-dependent monooxygenase ausM (463 aa).

3 residues coordinate FAD: Glu40, Gly54, and Arg113. The active site involves Tyr217. Asp309 and Ala322 together coordinate FAD. A helical transmembrane segment spans residues 443 to 463 (VPWLVISLPVLASVLCYLMFA).

The protein belongs to the paxM FAD-dependent monooxygenase family. The cofactor is FAD.

The protein localises to the membrane. It participates in secondary metabolite biosynthesis; terpenoid biosynthesis. Its function is as follows. FAD-dependent monooxygenase; part of the gene cluster that mediates the biosynthesis of calidodehydroaustin, a fungal meroterpenoid. The first step of the pathway is the synthesis of 3,5-dimethylorsellinic acid by the polyketide synthase ausA. 3,5-dimethylorsellinic acid is then prenylated by the polyprenyl transferase ausN. Further epoxidation by the FAD-dependent monooxygenase ausM and cyclization by the probable terpene cyclase ausL lead to the formation of protoaustinoid A. Protoaustinoid A is then oxidized to spiro-lactone preaustinoid A3 by the combined action of the FAD-binding monooxygenases ausB and ausC, and the dioxygenase ausE. Acid-catalyzed keto-rearrangement and ring contraction of the tetraketide portion of preaustinoid A3 by ausJ lead to the formation of preaustinoid A4. The aldo-keto reductase ausK, with the help of ausH, is involved in the next step by transforming preaustinoid A4 into isoaustinone which is in turn hydroxylated by the P450 monooxygenase ausI to form austinolide. The cytochrome P450 monooxygenase ausG modifies austinolide to austinol. Austinol is further acetylated to austin by the O-acetyltransferase ausP, which spontaneously changes to dehydroaustin. The cytochrome P450 monooxygenase ausR then converts dehydroaustin is into 7-dehydrodehydroaustin. The hydroxylation catalyzed by ausR permits the O-acetyltransferase ausQ to add an additional acetyl group to the molecule, leading to the formation of acetoxydehydroaustin. The short chain dehydrogenase ausT catalyzes the reduction of the double bond present between carbon atoms 1 and 2 to convert 7-dehydrodehydroaustin into 1,2-dihydro-7-hydroxydehydroaustin. AusQ catalyzes not only an acetylation reaction but also the addition of the PKS ausV diketide product to 1,2-dihydro-7-hydroxydehydroaustin, forming precalidodehydroaustin. Finally, the iron/alpha-ketoglutarate-dependent dioxygenase converts precalidodehydroaustin into calidodehydroaustin. This Aspergillus calidoustus protein is FAD-dependent monooxygenase ausM.